The sequence spans 462 residues: Protein phosphatase 1M (462 aa).

Positions Met1 to Phe10 are enriched in basic residues. A disordered region spans residues Met1 to Thr66. The 353-residue stretch at Glu100 to Leu452 folds into the PPM-type phosphatase domain. Residues Asp127 and Gly128 each coordinate Mn(2+).

Belongs to the PP2C family. Mg(2+) serves as cofactor. It depends on Mn(2+) as a cofactor. Widely expressed with highest levels in testis and lower levels in lung, kidney and brain.

It localises to the nucleus. The enzyme catalyses O-phospho-L-seryl-[protein] + H2O = L-seryl-[protein] + phosphate. The catalysed reaction is O-phospho-L-threonyl-[protein] + H2O = L-threonyl-[protein] + phosphate. This chain is Protein phosphatase 1M, found in Mus musculus (Mouse).